The primary structure comprises 228 residues: Cytochrome b6-f complex iron-sulfur subunit 2, chloroplastic (228 aa).

Residues 1-49 constitute a chloroplast transit peptide; sequence MASSTLSPVTQLCSSKSGLSSVSQCLLLKPMKINSHGLGKDKRMKVKCM. Residues 71–91 traverse the membrane as a helical segment; sequence LLLGALSLPTAGMLVPYATFF. The 97-residue stretch at 115 to 211 folds into the Rieske domain; it reads ASEWLKTHPP…ADIDDGKVVF (97 aa). [2Fe-2S] cluster contacts are provided by cysteine 157, histidine 159, cysteine 175, and histidine 178. A disulfide bond links cysteine 162 and cysteine 177.

It belongs to the Rieske iron-sulfur protein family. In terms of assembly, the 4 large subunits of the cytochrome b6-f complex are cytochrome b6, subunit IV (17 kDa polypeptide, petD), cytochrome f and the Rieske protein, while the 4 small subunits are petG, petL, petM and petN. The complex functions as a dimer. It depends on [2Fe-2S] cluster as a cofactor.

It is found in the plastid. It localises to the chloroplast thylakoid membrane. It catalyses the reaction 2 oxidized [plastocyanin] + a plastoquinol + 2 H(+)(in) = 2 reduced [plastocyanin] + a plastoquinone + 4 H(+)(out). In terms of biological role, component of the cytochrome b6-f complex, which mediates electron transfer between photosystem II (PSII) and photosystem I (PSI), cyclic electron flow around PSI, and state transitions. The sequence is that of Cytochrome b6-f complex iron-sulfur subunit 2, chloroplastic (petC2) from Nicotiana tabacum (Common tobacco).